The chain runs to 155 residues: Small ribosomal subunit protein uS9 (155 aa).

Belongs to the universal ribosomal protein uS9 family.

The protein is Small ribosomal subunit protein uS9 of Sinorhizobium medicae (strain WSM419) (Ensifer medicae).